The following is a 471-amino-acid chain: Putative multidrug resistance protein MdtD (471 aa).

The Periplasmic portion of the chain corresponds to 1–11 (MTDLPDNTRWQ). A helical membrane pass occupies residues 12–32 (LWIVAFGFFMQSLDTTIVNTA). The Cytoplasmic portion of the chain corresponds to 33-48 (LPSMAQSLGESPLHMH). Residues 49–69 (MVIVSYVLTVAVMLPASGWLA) traverse the membrane as a helical segment. Residues 70–76 (DKVGVRN) lie on the Periplasmic side of the membrane. The helical transmembrane segment at 77–97 (IFFTAIVLFTLGSLFCALSGT) threads the bilayer. Residues 98 to 101 (LNEL) lie on the Cytoplasmic side of the membrane. A helical membrane pass occupies residues 102–124 (LLARALQGVGGAMMVPVGRLTVM). Residues 125-137 (KIVPREQYMAAMT) are Periplasmic-facing. The chain crosses the membrane as a helical span at residues 138–158 (FVTLPGQVGPLLGPALGGLLV). Topologically, residues 159 to 164 (EYASWH) are cytoplasmic. The chain crosses the membrane as a helical span at residues 165–185 (WIFLINIPVGIIGAIATLMLM). At 186-196 (PNYTMQTRRFD) the chain is on the periplasmic side. The helical transmembrane segment at 197 to 217 (LSGFLLLAIGMAVLTLALDGS) threads the bilayer. Topologically, residues 218 to 224 (KGTGLSP) are cytoplasmic. A helical transmembrane segment spans residues 225-245 (LAITGLVAVGVVALVLYLLHA). Residues 246-262 (RNNNRALFSLKLFRTRT) are Periplasmic-facing. A helical transmembrane segment spans residues 263–283 (FSLGLAGSFAGRIGSGMLPFM). Residues 284-285 (TP) lie on the Cytoplasmic side of the membrane. Residues 286 to 306 (VFLQIGLGFSPFHAGLMMIPM) form a helical membrane-spanning segment. At 307-341 (VLGSMGMKRIVVQVVNRFGYRRVLVATTLGLSLVT) the chain is on the periplasmic side. The helical transmembrane segment at 342–362 (LLFMTTALLGWYYVLPFVLFL) threads the bilayer. The Cytoplasmic portion of the chain corresponds to 363 to 395 (QGMVNSTRFSSMNTLTLKDLPDNLASSGNSLLS). The helical transmembrane segment at 396–416 (MIMQLSMSIGVTIAGLLLGLF) threads the bilayer. At 417–430 (GSQHVSVDSGTTQT) the chain is on the periplasmic side. A helical transmembrane segment spans residues 431 to 451 (VFMYTWLSMAFIIALPAFIFA). Residues 452 to 471 (RVPNDTHQNVAISRRKRSAQ) lie on the Cytoplasmic side of the membrane.

The protein belongs to the major facilitator superfamily. TCR/Tet family.

It localises to the cell inner membrane. The sequence is that of Putative multidrug resistance protein MdtD from Escherichia coli O17:K52:H18 (strain UMN026 / ExPEC).